The primary structure comprises 444 residues: Phosphoglucosamine mutase (444 aa).

The Phosphoserine intermediate role is filled by Ser-104. Residues Ser-104, Asp-243, Asp-245, and Asp-247 each coordinate Mg(2+). Ser-104 carries the phosphoserine modification.

Belongs to the phosphohexose mutase family. Mg(2+) is required as a cofactor. Post-translationally, activated by phosphorylation.

It carries out the reaction alpha-D-glucosamine 1-phosphate = D-glucosamine 6-phosphate. In terms of biological role, catalyzes the conversion of glucosamine-6-phosphate to glucosamine-1-phosphate. This is Phosphoglucosamine mutase from Neisseria meningitidis serogroup A / serotype 4A (strain DSM 15465 / Z2491).